A 1209-amino-acid chain; its full sequence is DNA-directed RNA polymerase subunit beta' (1209 aa).

Zn(2+) contacts are provided by Cys60, Cys62, Cys75, and Cys78. Residues Asp450, Asp452, and Asp454 each coordinate Mg(2+). Zn(2+) contacts are provided by Cys819, Cys893, Cys900, and Cys903.

The protein belongs to the RNA polymerase beta' chain family. As to quaternary structure, the RNAP catalytic core consists of 2 alpha, 1 beta, 1 beta' and 1 omega subunit. When a sigma factor is associated with the core the holoenzyme is formed, which can initiate transcription. It depends on Mg(2+) as a cofactor. The cofactor is Zn(2+).

The catalysed reaction is RNA(n) + a ribonucleoside 5'-triphosphate = RNA(n+1) + diphosphate. Functionally, DNA-dependent RNA polymerase catalyzes the transcription of DNA into RNA using the four ribonucleoside triphosphates as substrates. The chain is DNA-directed RNA polymerase subunit beta' from Streptococcus mutans serotype c (strain ATCC 700610 / UA159).